We begin with the raw amino-acid sequence, 69 residues long: Sec-independent protein translocase protein TatA (69 aa).

A helical transmembrane segment spans residues 1-21 (MFGLGGQELILILLIILLLFG).

The protein belongs to the TatA/E family. As to quaternary structure, forms a complex with TatC.

It localises to the cell inner membrane. In terms of biological role, part of the twin-arginine translocation (Tat) system that transports large folded proteins containing a characteristic twin-arginine motif in their signal peptide across membranes. TatA could form the protein-conducting channel of the Tat system. The polypeptide is Sec-independent protein translocase protein TatA (Chlorobium phaeovibrioides (strain DSM 265 / 1930) (Prosthecochloris vibrioformis (strain DSM 265))).